The following is a 272-amino-acid chain: Insulin-like growth factor-binding protein 1 (272 aa).

Positions 1–25 (MPEFLTVVSWPFLILLSFQVRVVAG) are cleaved as a signal peptide. The 82-residue stretch at 28 to 109 (QPWHCAPCTA…TRGQGACVLE (82 aa)) folds into the IGFBP N-terminal domain. Intrachain disulfides connect Cys-32/Cys-59, Cys-35/Cys-61, Cys-43/Cys-62, Cys-50/Cys-65, Cys-73/Cys-86, and Cys-80/Cys-106. Positions 115–143 (TSSLSGSQHEEAKAAVASEDELAESPEMT) are disordered. A compositionally biased stretch (acidic residues) spans 132-143 (SEDELAESPEMT). A phosphoserine mark is found at Ser-139, Ser-157, and Ser-169. Thr-170 carries the post-translational modification Phosphothreonine. The residue at position 171 (Tyr-171) is a Phosphotyrosine. The Thyroglobulin type-1 domain occupies 186-264 (KEPCQRELYK…SLETRGDPNC (79 aa)). 3 disulfide bridges follow: Cys-189–Cys-219, Cys-230–Cys-241, and Cys-243–Cys-264. Residue Ser-255 is modified to Phosphoserine. The Cell attachment site motif lies at 259–261 (RGD).

Binds equally well IGF1 and IGF2. Interacts with integrin ITGA5:ITGB1. Interacts with VHL; this interaction inhibits HIF1A degradation.

It is found in the secreted. Multifunctional protein that plays a critical role in regulating the availability of IGFs such as IGF1 and IGF2 to their receptors and thereby regulates IGF-mediated cellular processes including cell migration, proliferation, differentiation or apoptosis in a cell-type specific manner. Also plays a positive role in cell migration by interacting with integrin ITGA5:ITGB1 through its RGD motif. Mechanistically, binding to integrins leads to activation of focal adhesion kinase/PTK2 and stimulation of the mitogen-activated protein kinase (MAPK) pathway. Regulates cardiomyocyte apoptosis by suppressing HIF-1alpha/HIF1A ubiquitination and subsequent degradation. The sequence is that of Insulin-like growth factor-binding protein 1 (Igfbp1) from Rattus norvegicus (Rat).